We begin with the raw amino-acid sequence, 149 residues long: 3-dehydroquinate dehydratase 2 (149 aa).

The active-site Proton acceptor is Tyr-24. Asn-75, His-81, and Asp-88 together coordinate substrate. Catalysis depends on His-101, which acts as the Proton donor. Substrate is bound by residues 102–103 (LS) and Arg-112.

It belongs to the type-II 3-dehydroquinase family. Homododecamer.

It catalyses the reaction 3-dehydroquinate = 3-dehydroshikimate + H2O. The protein operates within metabolic intermediate biosynthesis; chorismate biosynthesis; chorismate from D-erythrose 4-phosphate and phosphoenolpyruvate: step 3/7. Its function is as follows. Catalyzes a trans-dehydration via an enolate intermediate. This chain is 3-dehydroquinate dehydratase 2 (aroQ2), found in Pseudomonas putida (strain ATCC 47054 / DSM 6125 / CFBP 8728 / NCIMB 11950 / KT2440).